The chain runs to 132 residues: uncharacterized protein (132 aa).

2 consecutive transmembrane segments (helical) span residues F44–I64 and I75–F95.

The protein resides in the cytoplasm. It is found in the membrane. This is an uncharacterized protein from Schizosaccharomyces pombe (strain 972 / ATCC 24843) (Fission yeast).